We begin with the raw amino-acid sequence, 379 residues long: Chaperone protein DnaJ (379 aa).

The region spanning Asp5–Gly70 is the J domain. The CR-type zinc finger occupies Gly139–Thr217. Residues Cys152, Cys155, Cys169, Cys172, Cys191, Cys194, Cys205, and Cys208 each contribute to the Zn(2+) site. CXXCXGXG motif repeat units follow at residues Cys152–Gly159, Cys169–Gly176, Cys191–Gly198, and Cys205–Gly212.

The protein belongs to the DnaJ family. In terms of assembly, homodimer. It depends on Zn(2+) as a cofactor.

The protein localises to the cytoplasm. Participates actively in the response to hyperosmotic and heat shock by preventing the aggregation of stress-denatured proteins and by disaggregating proteins, also in an autonomous, DnaK-independent fashion. Unfolded proteins bind initially to DnaJ; upon interaction with the DnaJ-bound protein, DnaK hydrolyzes its bound ATP, resulting in the formation of a stable complex. GrpE releases ADP from DnaK; ATP binding to DnaK triggers the release of the substrate protein, thus completing the reaction cycle. Several rounds of ATP-dependent interactions between DnaJ, DnaK and GrpE are required for fully efficient folding. Also involved, together with DnaK and GrpE, in the DNA replication of plasmids through activation of initiation proteins. In Paraburkholderia phytofirmans (strain DSM 17436 / LMG 22146 / PsJN) (Burkholderia phytofirmans), this protein is Chaperone protein DnaJ.